A 234-amino-acid chain; its full sequence is Orotidine 5'-phosphate decarboxylase (234 aa).

Substrate contacts are provided by residues D11, K33, 60–69, T120, R181, Q190, G210, and R211; that span reads DLKFHDIPNT. The active-site Proton donor is K62.

The protein belongs to the OMP decarboxylase family. Type 1 subfamily. Homodimer.

The enzyme catalyses orotidine 5'-phosphate + H(+) = UMP + CO2. Its pathway is pyrimidine metabolism; UMP biosynthesis via de novo pathway; UMP from orotate: step 2/2. Functionally, catalyzes the decarboxylation of orotidine 5'-monophosphate (OMP) to uridine 5'-monophosphate (UMP). The polypeptide is Orotidine 5'-phosphate decarboxylase (Aliivibrio fischeri (strain ATCC 700601 / ES114) (Vibrio fischeri)).